Here is a 564-residue protein sequence, read N- to C-terminus: Dihydropyrimidinase-related protein 5 (564 aa).

Residues Thr-509 and Thr-514 each carry the phosphothreonine modification. Residues Ser-532 and Ser-538 each carry the phosphoserine modification. Arg-559 carries the omega-N-methylarginine modification.

Belongs to the metallo-dependent hydrolases superfamily. Hydantoinase/dihydropyrimidinase family. In terms of assembly, homotetramer, and heterotetramer with other DPYS-like proteins. Interacts with DPYSL2, DPYSL3 and DPYSL4. Interacts with SEPTIN4 isoform 4. Interacts with MAP2 and TUBB3. In terms of tissue distribution, detected in brain.

Its subcellular location is the cytoplasm. In terms of biological role, involved in the negative regulation of dendrite outgrowth. The polypeptide is Dihydropyrimidinase-related protein 5 (Dpysl5) (Mus musculus (Mouse)).